Here is a 408-residue protein sequence, read N- to C-terminus: Chaperone protein dnaJ 1, mitochondrial (408 aa).

The transit peptide at 1-26 (MRRFNWVLRHVQARRTFDSAIGLRQG) directs the protein to the mitochondrion. Residues 48 to 113 (NYYDVLGVSP…ERREEYDKLQ (66 aa)) enclose the J domain. Residues 173–247 (GCTKRLSFDA…CRGSGIVEGT (75 aa)) form a CR-type zinc finger. Positions 186, 189, 203, 206, 221, 224, 235, and 238 each coordinate Zn(2+). 4 CXXCXGXG motif repeats span residues 186–193 (CDSCDGLG), 203–210 (CPTCRGVG), 221–228 (CQTCKGTG), and 235–242 (CMSCRGSG).

The protein belongs to the DnaJ family. B/II subfamily. In terms of assembly, homodimer. Requires Zn(2+) as cofactor. Ubiquitous.

Its subcellular location is the mitochondrion. Plays a continuous role in plant development probably in the structural organization of compartments. The protein is Chaperone protein dnaJ 1, mitochondrial (ATJ1) of Arabidopsis thaliana (Mouse-ear cress).